Reading from the N-terminus, the 292-residue chain is Acetylglutamate kinase (292 aa).

Substrate is bound by residues 72–73, arginine 94, and asparagine 187; that span reads GG.

It belongs to the acetylglutamate kinase family. ArgB subfamily.

Its subcellular location is the cytoplasm. It catalyses the reaction N-acetyl-L-glutamate + ATP = N-acetyl-L-glutamyl 5-phosphate + ADP. It participates in amino-acid biosynthesis; L-arginine biosynthesis; N(2)-acetyl-L-ornithine from L-glutamate: step 2/4. In terms of biological role, catalyzes the ATP-dependent phosphorylation of N-acetyl-L-glutamate. This chain is Acetylglutamate kinase, found in Trichodesmium erythraeum (strain IMS101).